Consider the following 321-residue polypeptide: Lipoyl synthase (321 aa).

Positions 68, 73, 79, 94, 98, 101, and 308 each coordinate [4Fe-4S] cluster. Residues 80-297 (FNHGTATFMI…REFAESIGFT (218 aa)) enclose the Radical SAM core domain.

Belongs to the radical SAM superfamily. Lipoyl synthase family. It depends on [4Fe-4S] cluster as a cofactor.

It is found in the cytoplasm. The catalysed reaction is [[Fe-S] cluster scaffold protein carrying a second [4Fe-4S](2+) cluster] + N(6)-octanoyl-L-lysyl-[protein] + 2 oxidized [2Fe-2S]-[ferredoxin] + 2 S-adenosyl-L-methionine + 4 H(+) = [[Fe-S] cluster scaffold protein] + N(6)-[(R)-dihydrolipoyl]-L-lysyl-[protein] + 4 Fe(3+) + 2 hydrogen sulfide + 2 5'-deoxyadenosine + 2 L-methionine + 2 reduced [2Fe-2S]-[ferredoxin]. It functions in the pathway protein modification; protein lipoylation via endogenous pathway; protein N(6)-(lipoyl)lysine from octanoyl-[acyl-carrier-protein]: step 2/2. In terms of biological role, catalyzes the radical-mediated insertion of two sulfur atoms into the C-6 and C-8 positions of the octanoyl moiety bound to the lipoyl domains of lipoate-dependent enzymes, thereby converting the octanoylated domains into lipoylated derivatives. The sequence is that of Lipoyl synthase from Shewanella sediminis (strain HAW-EB3).